Reading from the N-terminus, the 303-residue chain is ATP phosphoribosyltransferase (303 aa).

The protein belongs to the ATP phosphoribosyltransferase family. Long subfamily. Mg(2+) serves as cofactor.

The protein localises to the cytoplasm. It catalyses the reaction 1-(5-phospho-beta-D-ribosyl)-ATP + diphosphate = 5-phospho-alpha-D-ribose 1-diphosphate + ATP. Its pathway is amino-acid biosynthesis; L-histidine biosynthesis; L-histidine from 5-phospho-alpha-D-ribose 1-diphosphate: step 1/9. Its activity is regulated as follows. Feedback inhibited by histidine. Its function is as follows. Catalyzes the condensation of ATP and 5-phosphoribose 1-diphosphate to form N'-(5'-phosphoribosyl)-ATP (PR-ATP). Has a crucial role in the pathway because the rate of histidine biosynthesis seems to be controlled primarily by regulation of HisG enzymatic activity. This Haemophilus influenzae (strain 86-028NP) protein is ATP phosphoribosyltransferase.